A 473-amino-acid chain; its full sequence is Photosystem II CP43 reaction center protein (473 aa).

A propeptide spanning residues 1–14 (MKTLYSLRRFYPVE) is cleaved from the precursor. Residue threonine 15 is modified to N-acetylthreonine. Phosphothreonine is present on threonine 15. The next 5 helical transmembrane spans lie at 69 to 93 (LFEVAHFVPEKPMYEQGLILLPHLA), 134 to 155 (LLGPETLEESFPFFGYVWKDRN), 178 to 200 (KALYFGGVYDTWAPGGGDVRKIT), 255 to 275 (KPFAWARRAFVWSGEAYLSYS), and 291 to 312 (WFNNTAYPSEFYGPTGPEASQA). Glutamate 367 provides a ligand contact to [CaMn4O5] cluster. The chain crosses the membrane as a helical span at residues 447-471 (RARAAAAGFEKGIDRDFEPVLSMTP).

It belongs to the PsbB/PsbC family. PsbC subfamily. As to quaternary structure, PSII is composed of 1 copy each of membrane proteins PsbA, PsbB, PsbC, PsbD, PsbE, PsbF, PsbH, PsbI, PsbJ, PsbK, PsbL, PsbM, PsbT, PsbX, PsbY, PsbZ, Psb30/Ycf12, at least 3 peripheral proteins of the oxygen-evolving complex and a large number of cofactors. It forms dimeric complexes. The cofactor is Binds multiple chlorophylls and provides some of the ligands for the Ca-4Mn-5O cluster of the oxygen-evolving complex. It may also provide a ligand for a Cl- that is required for oxygen evolution. PSII binds additional chlorophylls, carotenoids and specific lipids..

It localises to the plastid. It is found in the chloroplast thylakoid membrane. Its function is as follows. One of the components of the core complex of photosystem II (PSII). It binds chlorophyll and helps catalyze the primary light-induced photochemical processes of PSII. PSII is a light-driven water:plastoquinone oxidoreductase, using light energy to abstract electrons from H(2)O, generating O(2) and a proton gradient subsequently used for ATP formation. The protein is Photosystem II CP43 reaction center protein of Piper cenocladum (Ant piper).